Here is a 288-residue protein sequence, read N- to C-terminus: Mortality factor 4-like protein 2 (288 aa).

The span at 1–15 (MSSRKQASQTRGQQS) shows a compositional bias: polar residues. The disordered stretch occupies residues 1–115 (MSSRKQASQT…DPTVESEEAF (115 aa)). Serine 71 carries the phosphoserine modification. The MRG domain maps to 117–288 (SRMEVKVKIP…ASADYHRKAL (172 aa)).

As to quaternary structure, component of the NuA4 histone acetyltransferase complex which contains the catalytic subunit KAT5/TIP60 and the subunits EP400, TRRAP/PAF400, BRD8/SMAP, EPC1, DMAP1/DNMAP1, RUVBL1/TIP49, RUVBL2, ING3, actin, ACTL6A/BAF53A, MORF4L1/MRG15, MORF4L2/MRGX, MRGBP, YEATS4/GAS41 and VPS72/YL1. The NuA4 complex interacts with MYC and the adenovirus E1A protein. MORF4L1 may also participate in the formation of NuA4 related complexes which lack the KAT5/TIP60 catalytic subunit, but which include the SWI/SNF related protein SRCAP. Component of the MSIN3A histone deacetylase complex, which includes SIN3A, HDAC2, ARID4B, MORF4L1, RBBP4/RbAp48, and RBBP7/RbAp46. Interacts with MRFAP1 and RB1. May also interact with one or more as yet undefined members of the TLE (transducin-like enhancer of split) family of transcriptional repressors.

The protein localises to the nucleus. Component of the NuA4 histone acetyltransferase complex which is involved in transcriptional activation of select genes principally by acetylation of nucleosomal histone H4 and H2A. This modification may both alter nucleosome - DNA interactions and promote interaction of the modified histones with other proteins which positively regulate transcription. This complex may be required for the activation of transcriptional programs associated with oncogene and proto-oncogene mediated growth induction, tumor suppressor mediated growth arrest and replicative senescence, apoptosis, and DNA repair. The NuA4 complex ATPase and helicase activities seem to be, at least in part, contributed by the association of RUVBL1 and RUVBL2 with EP400. NuA4 may also play a direct role in DNA repair when directly recruited to sites of DNA damage. Also a component of the MSIN3A complex which acts to repress transcription by deacetylation of nucleosomal histones. The protein is Mortality factor 4-like protein 2 (Morf4l2) of Mus musculus (Mouse).